Reading from the N-terminus, the 130-residue chain is Sulfurtransferase TusD (130 aa).

Residue Cys80 is the Cysteine persulfide intermediate of the active site.

Belongs to the DsrE/TusD family. In terms of assembly, heterohexamer, formed by a dimer of trimers. The hexameric TusBCD complex contains 2 copies each of TusB, TusC and TusD. The TusBCD complex interacts with TusE.

It localises to the cytoplasm. Its function is as follows. Part of a sulfur-relay system required for 2-thiolation of 5-methylaminomethyl-2-thiouridine (mnm(5)s(2)U) at tRNA wobble positions. Accepts sulfur from TusA and transfers it in turn to TusE. The chain is Sulfurtransferase TusD from Sodalis glossinidius (strain morsitans).